The primary structure comprises 443 residues: Sulfoquinovose isomerase (443 aa).

This sequence belongs to the SqvD family.

The catalysed reaction is 6-sulfo-beta-D-quinovose = 6-deoxy-6-sulfo-D-fructose. Its function is as follows. Part of the sulfo-EMP2 pathway, a D-sulfoquinovose degradation pathway that produces sulfolactate (SL). Catalyzes the isomerization of sulfoquinovose (SQ) to 6-deoxy-6-sulfo-D-fructose (SF). This is Sulfoquinovose isomerase from Alkalicoccus urumqiensis (Bacillus urumqiensis).